The following is a 157-amino-acid chain: Secreted effector protein See1 (157 aa).

Residues 1-21 form the signal peptide; that stretch reads MLFTTFVSLLLVILCLVHVSA. Positions 124–157 are disordered; it reads SYRYGDSHGNSREAEYSVADHQSASGEYKFGPTT. A compositionally biased stretch (basic and acidic residues) spans 128 to 138; sequence GDSHGNSREAE.

In terms of assembly, interacts with a maize homolog of SGT1, a factor acting in cell cycle progression in yeast Saccharomyces cerevisiae and an important component of plant and human innate immunity.

The protein localises to the secreted. The protein resides in the host cytoplasm. Its subcellular location is the host nucleus. Functionally, effector protein involved in the induction of tumors in infected plant tissues by the fungus. Required for the reactivation of plant DNA synthesis, which is crucial for tumor progression in leaf cells. Interferes with the MAPK-triggered phosphorylation of maize SGT1 at a monocot-specific phosphorylation site, resulting in both modulation of immune responses and reactivation of DNA synthesis during leaf tumor formation. This is Secreted effector protein See1 from Mycosarcoma maydis (Corn smut fungus).